The primary structure comprises 522 residues: Amine oxidase [flavin-containing] (522 aa).

At 1 to 492 the chain is on the cytoplasmic side; sequence MTANAYDVIV…WERNLPSVGG (492 aa). Cys-398 is modified (S-8alpha-FAD cysteine). A helical; Anchor for type IV membrane protein membrane pass occupies residues 493-513; sequence FLKFMGVSSFLAAATAAGLVA. Topologically, residues 514–522 are mitochondrial intermembrane; sequence CKKGLLPRC.

The protein belongs to the flavin monoamine oxidase family. As to quaternary structure, monomer, homo- or heterodimer (containing two subunits of similar size). Each subunit contains a covalently bound flavin. Enzymatically active as monomer. The cofactor is FAD. As to expression, strongest expression in brain and intestine, followed by liver, heart and gill. Little expression in spleen, eye or muscle. In brain, highest activity in noradrenergic and serotonergic cell groups and those of the habenulointerpeduncular pathway; moderate levels in dopaminergic cell clusters.

The protein localises to the mitochondrion outer membrane. It catalyses the reaction a secondary aliphatic amine + O2 + H2O = a primary amine + an aldehyde + H2O2. It carries out the reaction a primary methyl amine + O2 + H2O = an aldehyde + H2O2 + NH4(+). The catalysed reaction is serotonin + O2 + H2O = (5-hydroxyindol-3-yl)acetaldehyde + H2O2 + NH4(+). The enzyme catalyses 2-phenylethylamine + O2 + H2O = 2-phenylacetaldehyde + H2O2 + NH4(+). It catalyses the reaction tyramine + O2 + H2O = (4-hydroxyphenyl)acetaldehyde + H2O2 + NH4(+). It carries out the reaction dopamine + O2 + H2O = 3,4-dihydroxyphenylacetaldehyde + H2O2 + NH4(+). The catalysed reaction is (R)-adrenaline + O2 + H2O = (R)-3,4-dihydroxymandelaldehyde + methylamine + H2O2. The enzyme catalyses (R)-noradrenaline + O2 + H2O = (R)-3,4-dihydroxymandelaldehyde + H2O2 + NH4(+). It catalyses the reaction kynuramine + O2 + H2O = 3-(2-aminophenyl)-3-oxopropanal + H2O2 + NH4(+). It carries out the reaction tryptamine + O2 + H2O = indole-3-acetaldehyde + H2O2 + NH4(+). With respect to regulation, inhibited by both clorgyline (selective MAOA inhibitor) and deprenyl (selective MAOB inhibitor). Its function is as follows. Catalyzes the oxidative deamination of biogenic and xenobiotic amines and has important functions in the metabolism of neuroactive and vasoactive amines in the central nervous system and peripheral tissues. Preferentially oxidizes serotonin and tyramine. Also catalyzes the oxidative deamination of kynuramine to 3-(2-aminophenyl)-3-oxopropanal that can spontaneously condense to 4-hydroxyquinoline. This chain is Amine oxidase [flavin-containing], found in Danio rerio (Zebrafish).